A 545-amino-acid chain; its full sequence is CTP synthase (545 aa).

The tract at residues 1-266 (MATNYIFVTG…DTFVCDRFRL (266 aa)) is amidoligase domain. CTP is bound at residue S14. UTP is bound at residue S14. ATP is bound by residues 15 to 20 (SLGKGI) and D72. Residues D72 and E140 each contribute to the Mg(2+) site. CTP is bound by residues 147 to 149 (DIE), 187 to 192 (KTKPTQ), and K223. Residues 187-192 (KTKPTQ) and K223 contribute to the UTP site. 239 to 241 (KDV) provides a ligand contact to ATP. In terms of domain architecture, Glutamine amidotransferase type-1 spans 291 to 542 (TIGMVGKYVE…VAAAKAYQDS (252 aa)). G352 contacts L-glutamine. The active-site Nucleophile; for glutamine hydrolysis is the C379. L-glutamine contacts are provided by residues 380–383 (LGMQ), E403, and R470. Catalysis depends on residues H515 and E517.

Belongs to the CTP synthase family. As to quaternary structure, homotetramer.

The enzyme catalyses UTP + L-glutamine + ATP + H2O = CTP + L-glutamate + ADP + phosphate + 2 H(+). The catalysed reaction is L-glutamine + H2O = L-glutamate + NH4(+). It carries out the reaction UTP + NH4(+) + ATP = CTP + ADP + phosphate + 2 H(+). The protein operates within pyrimidine metabolism; CTP biosynthesis via de novo pathway; CTP from UDP: step 2/2. With respect to regulation, allosterically activated by GTP, when glutamine is the substrate; GTP has no effect on the reaction when ammonia is the substrate. The allosteric effector GTP functions by stabilizing the protein conformation that binds the tetrahedral intermediate(s) formed during glutamine hydrolysis. Inhibited by the product CTP, via allosteric rather than competitive inhibition. Functionally, catalyzes the ATP-dependent amination of UTP to CTP with either L-glutamine or ammonia as the source of nitrogen. Regulates intracellular CTP levels through interactions with the four ribonucleotide triphosphates. The protein is CTP synthase of Actinobacillus pleuropneumoniae serotype 5b (strain L20).